The following is a 452-amino-acid chain: Scaffold protein ILK (452 aa).

Met-1 carries the post-translational modification N-acetylmethionine. ANK repeat units lie at residues 2–30 (DDIFTQCREGNAVAVRLWLDNTENDLNQG), 31–63 (DDHGFSPLHWACREGRSAVVEMLIMRGARINVM), 64–96 (NRGDDTPLHLAASHGHRDIVQKLLQYKADINAV), 97–129 (NEHGNVPLHYACFWGQDQVAEDLVANGALVSIC), and 130–174 (NKYG…GTTR). The segment at 33–139 (HGFSPLHWAC…NKYGEMPVDK (107 aa)) is interaction with LIMS1. Thr-173 is modified (phosphothreonine; by PAK1). A PH-like; mediates interaction with TGFB1I1 region spans residues 180-212 (GTLNKHSGIDFKQLNFLTKLNENHSGELWKGRW). Position 186 is a phosphoserine (Ser-186). Residues 193-446 (LNFLTKLNEN…PKFDMIVPIL (254 aa)) enclose the Protein kinase domain. The ATP site is built by Asn-200, Asn-202, His-203, Ser-204, and Lys-220. Phosphoserine; by PAK1 is present on Ser-246. His-270, Met-272, and Asn-279 together coordinate ATP. Mg(2+) is bound at residue Asp-339. Lys-341 lines the ATP pocket. The Nuclear localization signal signature appears at 363–371 (KKPEDTNRR). The residue at position 426 (Lys-426) is an N6-acetyllysine.

The protein belongs to the protein kinase superfamily. TKL Ser/Thr protein kinase family. As to quaternary structure, component of the heterotrimeric IPP (ILK-PINCH-PARVIN) complex composed of ILK, LIMS1/PINCH and PARVA; the complex binds to F-actin via the C-terminal tail of LIMS1 and the N-terminal region of PARVA, promoting F-actin filament bundling. Formation of the IPP complex is dependent on protein kinase C and precedes integrin-mediated cell adhesion and spreading. ILK also interacts with LIMS2/PINCH2 and with PARVB and PARVG which may substitute for LIMS1 and PARVA in the IPP complex; PARVA and PARVB compete for the same binding site. Interaction with PARVG promotes the establishment of cell polarity required for leukocyte migration. Interacts with the cytoplasmic domain of integrin ITGB1 and may also interact with integrins ITGB2, ITGB3 and/or ITGB5. Interacts probably also with TGFB1I1. Interacts (via ANK repeats) with EPHA1 (via SAM domain); stimulated by EFNA1 but independent of the kinase activity of EPHA1. Interacts with FERMT2. Interacts with LIMD2; leading to activate the protein kinase activity. Interacts with PXN/PAXILLIN (via LD motif 4). Interacts with CCDC25 (via cytoplasmic region); initiating the ILK-PARVB cascade to induce cytoskeleton rearrangement and directional migration of cells. Interacts with IQGAP1; the interaction is required for localization of IQGAP1 to the cell cortex. Post-translationally, phosphorylation by PAK1 modulates ILK subcellular location by promoting its nuclear export. As to expression, highly expressed in heart followed by skeletal muscle, pancreas and kidney. Weakly expressed in placenta, lung and liver.

The protein localises to the cell junction. The protein resides in the focal adhesion. Its subcellular location is the cell membrane. It localises to the cell projection. It is found in the lamellipodium. The protein localises to the cytoplasm. The protein resides in the myofibril. Its subcellular location is the sarcomere. It localises to the nucleus. It is found in the cytoskeleton. The protein localises to the microtubule organizing center. The protein resides in the centrosome. Its subcellular location is the cell cortex. In terms of biological role, scaffold protein which mediates protein-protein interactions during a range of cellular events including focal adhesion assembly, cell adhesion and cell migration. Regulates integrin-mediated signal transduction by contributing to inside-out integrin activation. Recruits PARVA and LIMS1/PITCH to form the heterotrimeric IPP (ILK-PINCH-PARVIN) complex which binds to F-actin via the C-terminal tail of LIMS1 and the N-terminal region of PARVA, promoting F-actin filament bundling, a process required to generate force for actin cytoskeleton reorganization and subsequent dynamic cell adhesion events such as cell spreading and migration. Binding to PARVA promotes effective assembly of ILK into focal adhesions while PARVA-bound ILK can simultaneously engage integrin-beta cytoplasmic tails to mediate cell adhesion. Plays a role with PARVG in promoting the cell adhesion and spreading of leukocytes. Acts as an upstream effector of both AKT1/PKB and GSK3. Mediates trafficking of caveolae to the cell surface in an ITGB1-dependent manner by promoting the recruitment of IQGAP1 to the cell cortex which cooperates with its effector DIAPH1 to locally stabilize microtubules and allow stable insertion of caveolae into the plasma membrane. Required for the maintenance of mitotic spindle integrity by promoting phosphorylation of TACC3 by AURKA. Associates with chromatin and may act as a negative regulator of transcription when located in the nucleus. This Homo sapiens (Human) protein is Scaffold protein ILK.